A 465-amino-acid polypeptide reads, in one-letter code: UDP-N-acetylmuramate--L-alanine ligase (465 aa).

112–118 is an ATP binding site; the sequence is GTHGKTT.

It belongs to the MurCDEF family.

It localises to the cytoplasm. The enzyme catalyses UDP-N-acetyl-alpha-D-muramate + L-alanine + ATP = UDP-N-acetyl-alpha-D-muramoyl-L-alanine + ADP + phosphate + H(+). The protein operates within cell wall biogenesis; peptidoglycan biosynthesis. Its function is as follows. Cell wall formation. The chain is UDP-N-acetylmuramate--L-alanine ligase from Burkholderia ambifaria (strain ATCC BAA-244 / DSM 16087 / CCUG 44356 / LMG 19182 / AMMD) (Burkholderia cepacia (strain AMMD)).